Reading from the N-terminus, the 330-residue chain is MARMYYDADANLDLLNGKTVAIIGYGSQGHAHALNLRDSGVNVVVGLYPGSKSAAKAEAEGPKVLPVAEAAQAADWIMILLPDEFQKSVFENEIRPALSAGKVLAFAHGFNIHFAQIVPPADVDVVMIAPKSPGHLVRRTYEQGQGVPCLFAIYQDASGQARDRAMAYAKGIGGTRAGILETSFREETETDLFGEQAVLCGGLSALIKAGFETLVEAGYQPELAYFECLHEVKLIVDLIVEGGLAAMRDSISNTAEYGDYVTGPRLITEETKAEMKRVLADIQQGRFALDFVQECGAGKPVMTATRRLEAEHPIESVGKDLRAMFSWLKK.

The KARI N-terminal Rossmann domain maps to 2–182; that stretch reads ARMYYDADAN…GGTRAGILET (181 aa). NADP(+)-binding positions include 25–28, serine 51, serine 53, and 83–86; these read YGSQ and DEFQ. Residue histidine 108 is part of the active site. Glycine 134 contributes to the NADP(+) binding site. The KARI C-terminal knotted domain maps to 183 to 328; that stretch reads SFREETETDL…KDLRAMFSWL (146 aa). Mg(2+) is bound by residues aspartate 191, glutamate 195, glutamate 227, and glutamate 231. Serine 252 is a substrate binding site.

It belongs to the ketol-acid reductoisomerase family. Mg(2+) is required as a cofactor.

It carries out the reaction (2R)-2,3-dihydroxy-3-methylbutanoate + NADP(+) = (2S)-2-acetolactate + NADPH + H(+). It catalyses the reaction (2R,3R)-2,3-dihydroxy-3-methylpentanoate + NADP(+) = (S)-2-ethyl-2-hydroxy-3-oxobutanoate + NADPH + H(+). The protein operates within amino-acid biosynthesis; L-isoleucine biosynthesis; L-isoleucine from 2-oxobutanoate: step 2/4. It participates in amino-acid biosynthesis; L-valine biosynthesis; L-valine from pyruvate: step 2/4. Its function is as follows. Involved in the biosynthesis of branched-chain amino acids (BCAA). Catalyzes an alkyl-migration followed by a ketol-acid reduction of (S)-2-acetolactate (S2AL) to yield (R)-2,3-dihydroxy-isovalerate. In the isomerase reaction, S2AL is rearranged via a Mg-dependent methyl migration to produce 3-hydroxy-3-methyl-2-ketobutyrate (HMKB). In the reductase reaction, this 2-ketoacid undergoes a metal-dependent reduction by NADPH to yield (R)-2,3-dihydroxy-isovalerate. The chain is Ketol-acid reductoisomerase (NADP(+)) from Synechococcus sp. (strain ATCC 27144 / PCC 6301 / SAUG 1402/1) (Anacystis nidulans).